A 353-amino-acid chain; its full sequence is Putative protein SPATA31J1 (353 aa).

Residues 34-54 (IPQIIHFVLFVVFSLVILIIL) form a helical membrane-spanning segment. A disordered region spans residues 122–271 (EGSSHHLPRQ…NPGWVSWSDS (150 aa)). Over residues 182-195 (SVESLGSPSSLSSS) the composition is skewed to low complexity. Over residues 211-221 (PPASTLSPNPT) the composition is skewed to polar residues. Positions 222-237 (SSTESLGYLSSLSSSQ) are enriched in low complexity. Basic residues predominate over residues 244–262 (PLKHPSHKPRGRSLPRRRN).

It belongs to the SPATA31 family.

The protein localises to the membrane. The chain is Putative protein SPATA31J1 from Homo sapiens (Human).